A 256-amino-acid polypeptide reads, in one-letter code: Imidazole glycerol phosphate synthase subunit HisF (256 aa).

Active-site residues include D11 and D130.

Belongs to the HisA/HisF family. As to quaternary structure, heterodimer of HisH and HisF.

The protein localises to the cytoplasm. It carries out the reaction 5-[(5-phospho-1-deoxy-D-ribulos-1-ylimino)methylamino]-1-(5-phospho-beta-D-ribosyl)imidazole-4-carboxamide + L-glutamine = D-erythro-1-(imidazol-4-yl)glycerol 3-phosphate + 5-amino-1-(5-phospho-beta-D-ribosyl)imidazole-4-carboxamide + L-glutamate + H(+). It participates in amino-acid biosynthesis; L-histidine biosynthesis; L-histidine from 5-phospho-alpha-D-ribose 1-diphosphate: step 5/9. Its function is as follows. IGPS catalyzes the conversion of PRFAR and glutamine to IGP, AICAR and glutamate. The HisF subunit catalyzes the cyclization activity that produces IGP and AICAR from PRFAR using the ammonia provided by the HisH subunit. The polypeptide is Imidazole glycerol phosphate synthase subunit HisF (Cupriavidus pinatubonensis (strain JMP 134 / LMG 1197) (Cupriavidus necator (strain JMP 134))).